The primary structure comprises 159 residues: Transcription elongation factor GreA (159 aa).

The stretch at 47 to 77 (SENAEYDAARDKQATIENEITEIQHILDNYE) forms a coiled coil.

Belongs to the GreA/GreB family.

Necessary for efficient RNA polymerase transcription elongation past template-encoded arresting sites. The arresting sites in DNA have the property of trapping a certain fraction of elongating RNA polymerases that pass through, resulting in locked ternary complexes. Cleavage of the nascent transcript by cleavage factors such as GreA or GreB allows the resumption of elongation from the new 3'terminus. GreA releases sequences of 2 to 3 nucleotides. This is Transcription elongation factor GreA from Metamycoplasma arthritidis (strain 158L3-1) (Mycoplasma arthritidis).